The chain runs to 168 residues: Peptidoglycan-associated lipoprotein (168 aa).

The signal sequence occupies residues 1–24; that stretch reads MRRIQSIARSPIAIALFMSLAVAG. The N-palmitoyl cysteine moiety is linked to residue Cys25. Cys25 carries S-diacylglycerol cysteine lipidation. Positions 51 to 167 constitute an OmpA-like domain; it reads QDFTVNVGDR…RAVTVLNGAG (117 aa).

Belongs to the Pal lipoprotein family. As to quaternary structure, the Tol-Pal system is composed of five core proteins: the inner membrane proteins TolA, TolQ and TolR, the periplasmic protein TolB and the outer membrane protein Pal. They form a network linking the inner and outer membranes and the peptidoglycan layer. Post-translationally, the N-terminus is blocked.

The protein localises to the cell outer membrane. Part of the Tol-Pal system, which plays a role in outer membrane invagination during cell division and is important for maintaining outer membrane integrity. This chain is Peptidoglycan-associated lipoprotein, found in Brucella abortus biovar 1 (strain 9-941).